The chain runs to 323 residues: Large ribosomal subunit protein uL10x (323 aa).

Residues 287–323 (DAGGGSAQAGAAAKVEEKKEESDEEDYEGGFGLFDEE) form a disordered region. Residue serine 308 is modified to Phosphoserine. Over residues 308–323 (SDEEDYEGGFGLFDEE) the composition is skewed to acidic residues. Tyrosine 313 carries the post-translational modification Phosphotyrosine.

This sequence belongs to the universal ribosomal protein uL10 family. As to quaternary structure, P0 forms a pentameric complex by interaction with dimers of P1 and P2.

Ribosomal protein P0 is the functional equivalent of E.coli protein L10. This chain is Large ribosomal subunit protein uL10x (RPP0C), found in Arabidopsis thaliana (Mouse-ear cress).